Reading from the N-terminus, the 560-residue chain is Interferon alpha/beta receptor 1 (560 aa).

Residues 1–24 (MLGLLGATTLMLVAGAPWVLPAGG) form the signal peptide. The Extracellular portion of the chain corresponds to 25–437 (ADLRSPENVV…EKTKPGSTSQ (413 aa)). Fibronectin type-III domains are found at residues 29 to 125 (SPEN…FQEA), 133 to 224 (HLEA…INTT), 231 to 329 (SPEN…TEMQ), and 333 to 433 (FPPV…TKPG). The N-linked (GlcNAc...) asparagine glycan is linked to Asn55. A disulfide bond links Cys76 and Cys84. N-linked (GlcNAc...) asparagine glycans are attached at residues Asn85, Asn108, and Asn172. The cysteines at positions 199 and 220 are disulfide-linked. N-linked (GlcNAc...) asparagine glycosylation is found at Asn222, Asn249, and Asn254. Cysteines 283 and 291 form a disulfide. Asn313, Asn377, and Asn417 each carry an N-linked (GlcNAc...) asparagine glycan. The cysteines at positions 404 and 427 are disulfide-linked. The chain crosses the membrane as a helical span at residues 438–458 (AWLIAGILSAILLFPAVFYGV). Over 459–560 (KVVSRCINYV…GEEILRQAAV (102 aa)) the chain is Cytoplasmic. Residue Cys464 is the site of S-palmitoyl cysteine attachment. A phosphotyrosine; by TYK2 mark is found at Tyr467 and Tyr482. Positions 492-501 (LLSTSEEQTE) are important for interaction with TYK2. Residues Ser496 and Ser536 each carry the phosphoserine modification. The segment at 520–560 (QIDDNHSRCSSQTNRDSGVYSNEDENSGSKIGEEILRQAAV) is disordered. The span at 527-539 (RCSSQTNRDSGVY) shows a compositional bias: polar residues. Residues 550-560 (IGEEILRQAAV) show a composition bias toward basic and acidic residues.

It belongs to the type II cytokine receptor family. In terms of assembly, heterodimer with IFNAR2; forming the receptor for type I interferon. Interacts with TYK2. Interacts with STAT1 and STAT2; the interaction requires its phosphorylation at Tyr-482. Interacts (serine-phosphorylated form) with FBXW11, the substrate recognition component of a SCF (SKP1-CUL1-F-box protein) E3 ubiquitin-protein ligase complex. Interacts with SHMT2; this promotes interaction with ABRAXAS2 and the BRISC complex. Interacts with TRIM10; this interaction prevents association between IFNAR1 and TYK2. Post-translationally, ubiquitinated, leading to its internalization and degradation. Polyubiquitinated via 'Lys-48'-linked and 'Lys-63'-linked ubiquitin chains, leading to receptor internalization and lysosomal degradation. The 'Lys-63'-linked ubiquitin chains are cleaved off by the BRISC complex. Phosphorylated on tyrosine residues in response to interferon-binding: phosphorylation by TYK2 tyrosine kinase creates docking sites for STAT proteins. Phosphorylated on serine residues in response to interferon binding; this promotes interaction with FBXW11 and ubiquitination. In terms of processing, palmitoylation at Cys-464 is required for the activation of STAT1 and STAT2.

It localises to the cell membrane. The protein localises to the late endosome. It is found in the lysosome. In terms of biological role, together with IFNAR2, forms the heterodimeric receptor for type I interferons (including interferons alpha, beta, epsilon, omega and kappa). Type I interferon binding activates the JAK-STAT signaling cascade, resulting in transcriptional activation or repression of interferon-regulated genes that encode the effectors of the interferon response. Mechanistically, type I interferon-binding brings the IFNAR1 and IFNAR2 subunits into close proximity with one another, driving their associated Janus kinases (JAKs) (TYK2 bound to IFNAR1 and JAK1 bound to IFNAR2) to cross-phosphorylate one another. The activated kinases phosphorylate specific tyrosine residues on the intracellular domains of IFNAR1 and IFNAR2, forming docking sites for the STAT transcription factors. STAT proteins are then phosphorylated by the JAKs, promoting their translocation into the nucleus to regulate expression of interferon-regulated genes. Can also act independently of IFNAR2: form an active IFNB1 receptor by itself and activate a signaling cascade that does not involve activation of the JAK-STAT pathway. In Sus scrofa (Pig), this protein is Interferon alpha/beta receptor 1 (IFNAR1).